A 457-amino-acid chain; its full sequence is tRNA-2-methylthio-N(6)-dimethylallyladenosine synthase (457 aa).

An MTTase N-terminal domain is found at K3 to A120. The [4Fe-4S] cluster site is built by C12, C49, C83, C157, C161, and C164. The Radical SAM core domain occupies R143–R377. Positions R380–L447 constitute a TRAM domain.

Belongs to the methylthiotransferase family. MiaB subfamily. Monomer. It depends on [4Fe-4S] cluster as a cofactor.

The protein resides in the cytoplasm. The catalysed reaction is N(6)-dimethylallyladenosine(37) in tRNA + (sulfur carrier)-SH + AH2 + 2 S-adenosyl-L-methionine = 2-methylsulfanyl-N(6)-dimethylallyladenosine(37) in tRNA + (sulfur carrier)-H + 5'-deoxyadenosine + L-methionine + A + S-adenosyl-L-homocysteine + 2 H(+). In terms of biological role, catalyzes the methylthiolation of N6-(dimethylallyl)adenosine (i(6)A), leading to the formation of 2-methylthio-N6-(dimethylallyl)adenosine (ms(2)i(6)A) at position 37 in tRNAs that read codons beginning with uridine. This is tRNA-2-methylthio-N(6)-dimethylallyladenosine synthase from Burkholderia ambifaria (strain ATCC BAA-244 / DSM 16087 / CCUG 44356 / LMG 19182 / AMMD) (Burkholderia cepacia (strain AMMD)).